Consider the following 326-residue polypeptide: Adenosine receptor A1 (326 aa).

Residues 1 to 10 (MPPYISAFQA) lie on the Extracellular side of the membrane. Residues 11-33 (AYIGIEVLIALVSVPGNVLVIWA) form a helical membrane-spanning segment. Over 34-46 (VKVNQALRDATFC) the chain is Cytoplasmic. A helical membrane pass occupies residues 47-69 (FIVSLAVADVAVGALVIPLAILI). Topologically, residues 70–80 (NIGPQTYFHTC) are extracellular. A disulfide bond links Cys80 and Cys169. Residues 81 to 102 (LMVACPVLILTQSSILALLAIA) form a helical membrane-spanning segment. Topologically, residues 103–123 (VDRYLRVKIPLRYKTVVTQRR) are cytoplasmic. Residues 124-146 (AAVAIAGCWILSLVVGLTPMFGW) form a helical membrane-spanning segment. Topologically, residues 147–176 (NNLSVVEQDWRANGSVGEPVIKCEFEKVIS) are extracellular. N-linked (GlcNAc...) asparagine glycans are attached at residues Asn148 and Asn159. The helical transmembrane segment at 177–201 (MEYMVYFNFFVWVLPPLLLMVLIYL) threads the bilayer. The Cytoplasmic segment spans residues 202 to 235 (EVFYLIRKQLNKKVSASSGDPQKYYGKELKIAKS). Residues 236–259 (LALILFLFALSWLPLHILNCITLF) traverse the membrane as a helical segment. Over 260–267 (CPTCQKPS) the chain is Extracellular. The chain crosses the membrane as a helical span at residues 268 to 292 (ILIYIAIFLTHGNSAMNPIVYAFRI). The Cytoplasmic portion of the chain corresponds to 293–326 (HKFRVTFLKIWNDHFRCQPKPPIDEDLPEEKAED). Cys309 carries S-palmitoyl cysteine lipidation.

It belongs to the G-protein coupled receptor 1 family. In terms of tissue distribution, widely expressed in brain and spinal cord.

Its subcellular location is the cell membrane. Receptor for adenosine. The activity of this receptor is mediated by G proteins which inhibit adenylyl cyclase. The polypeptide is Adenosine receptor A1 (Adora1) (Rattus norvegicus (Rat)).